A 58-amino-acid chain; its full sequence is Small ribosomal subunit protein bS21B (58 aa).

The protein belongs to the bacterial ribosomal protein bS21 family.

This is Small ribosomal subunit protein bS21B (rpsU2) from Nostoc sp. (strain PCC 7120 / SAG 25.82 / UTEX 2576).